The sequence spans 381 residues: Prostatic acid phosphatase (381 aa).

The N-terminal stretch at Met-1–Ala-31 is a signal peptide. Arg-42 serves as a coordination point for substrate. Catalysis depends on His-43, which acts as the Nucleophile. Arg-46 contacts substrate. A glycan (N-linked (GlcNAc...) asparagine) is linked at Asn-93. Substrate is bound at residue Arg-110. 3 cysteine pairs are disulfide-bonded: Cys-160–Cys-371, Cys-214–Cys-312, and Cys-346–Cys-350. Asn-219 carries an N-linked (GlcNAc...) asparagine glycan. Residue His-288 coordinates substrate. Residue Asp-289 is the Proton donor of the active site. A glycan (N-linked (GlcNAc...) asparagine) is linked at Asn-332.

The protein belongs to the histidine acid phosphatase family. Homodimer; dimer formation is required for phosphatase activity. N-glycosylated. In terms of tissue distribution, expressed in prostate epithelium. Also expressed in the pelvic nerve and sacral spinal cord. Localizes in peptidergic and non-peptidergic nociceptive (pain-sensing) neurons.

The protein resides in the secreted. Its subcellular location is the cell membrane. It localises to the lysosome membrane. It catalyses the reaction a phosphate monoester + H2O = an alcohol + phosphate. The catalysed reaction is a ribonucleoside 5'-phosphate + H2O = a ribonucleoside + phosphate. The enzyme catalyses 1-(9Z-octadecenoyl)-sn-glycero-3-phosphate + H2O = 1-(9Z-octadecenoyl)-sn-glycerol + phosphate. It carries out the reaction O-phospho-L-tyrosyl-[protein] + H2O = L-tyrosyl-[protein] + phosphate. With respect to regulation, inhibited by L(+)-tartrate. In terms of biological role, a non-specific tyrosine phosphatase that dephosphorylates a diverse number of substrates under acidic conditions (pH 4-6) including alkyl, aryl, and acyl orthophosphate monoesters and phosphorylated proteins. Has lipid phosphatase activity and inactivates lysophosphatidic acid in seminal plasma. Functionally, in addition to its tyrosine phosphatase activity, also has ecto-5'-nucleotidase activity in dorsal root ganglion (DRG) neurons. Generates adenosine from AMP. This extracellular adenosine leads to a decrease in chronic pain by activating A1R in nociceptive neurons. In Rattus norvegicus (Rat), this protein is Prostatic acid phosphatase (Acp3).